Consider the following 865-residue polypeptide: Alanine--tRNA ligase (865 aa).

The Zn(2+) site is built by His554, His558, Cys656, and His660.

Belongs to the class-II aminoacyl-tRNA synthetase family. Requires Zn(2+) as cofactor.

It localises to the cytoplasm. The enzyme catalyses tRNA(Ala) + L-alanine + ATP = L-alanyl-tRNA(Ala) + AMP + diphosphate. Functionally, catalyzes the attachment of alanine to tRNA(Ala) in a two-step reaction: alanine is first activated by ATP to form Ala-AMP and then transferred to the acceptor end of tRNA(Ala). Also edits incorrectly charged Ser-tRNA(Ala) and Gly-tRNA(Ala) via its editing domain. The polypeptide is Alanine--tRNA ligase (Francisella tularensis subsp. mediasiatica (strain FSC147)).